Reading from the N-terminus, the 297-residue chain is Cell division protein ZipA (297 aa).

Position 1 (Met1) is a topological domain, periplasmic. A helical membrane pass occupies residues 2–22; sequence EIGLREWLILIGIIVIAGILF. Topologically, residues 23–297 are cytoplasmic; the sequence is DGWRRMRGGK…FERRALTQKR (275 aa). The segment at 48–151 is disordered; it reads DEEGGSAEVL…AAPASNSVKE (104 aa). Basic and acidic residues predominate over residues 83–92; sequence ARDREREPKP. A compositionally biased stretch (acidic residues) spans 124–133; the sequence is LFSDSDDDFA.

Belongs to the ZipA family. In terms of assembly, interacts with FtsZ via their C-terminal domains.

The protein localises to the cell inner membrane. Its function is as follows. Essential cell division protein that stabilizes the FtsZ protofilaments by cross-linking them and that serves as a cytoplasmic membrane anchor for the Z ring. Also required for the recruitment to the septal ring of downstream cell division proteins. The chain is Cell division protein ZipA from Pseudomonas putida (strain ATCC 47054 / DSM 6125 / CFBP 8728 / NCIMB 11950 / KT2440).